Reading from the N-terminus, the 338-residue chain is Fructose-1,6-bisphosphatase 1 (338 aa).

An N-acetylalanine modification is found at Ala-2. Residues 18–22 and 28–32 each bind AMP; these read VMEEG and TGELT. Residues Asp-69 and Glu-98 each coordinate Mg(2+). 113–114 provides a ligand contact to AMP; it reads KY. Mg(2+)-binding residues include Asp-119, Leu-121, and Asp-122. 122–125 contacts substrate; the sequence is DGSS. Arg-141 is a binding site for AMP. The residue at position 151 (Lys-151) is an N6-succinyllysine. Residues 213 to 216, 244 to 249, Tyr-265, and 275 to 277 each bind substrate; these read NEGY, RYVGSM, and KLR. Tyr-216, Tyr-245, and Tyr-265 each carry phosphotyrosine. Glu-281 provides a ligand contact to Mg(2+).

This sequence belongs to the FBPase class 1 family. In terms of assembly, homotetramer. Requires Mg(2+) as cofactor. In terms of tissue distribution, expressed in pancreatic islets.

It catalyses the reaction beta-D-fructose 1,6-bisphosphate + H2O = beta-D-fructose 6-phosphate + phosphate. It participates in carbohydrate biosynthesis; gluconeogenesis. Subject to complex allosteric regulation. The enzyme can assume an active R-state, or an inactive T-state. Intermediate conformations may exist. AMP acts as an allosteric inhibitor. AMP binding affects the turnover of bound substrate and not the affinity for substrate. Fructose 2,6-bisphosphate acts as a competitive inhibitor. Fructose 2,6-bisphosphate and AMP have synergistic effects. Functionally, catalyzes the hydrolysis of fructose 1,6-bisphosphate to fructose 6-phosphate in the presence of divalent cations, acting as a rate-limiting enzyme in gluconeogenesis. Plays a role in regulating glucose sensing and insulin secretion of pancreatic beta-cells. Appears to modulate glycerol gluconeogenesis in liver. Important regulator of appetite and adiposity; increased expression of the protein in liver after nutrient excess increases circulating satiety hormones and reduces appetite-stimulating neuropeptides and thus seems to provide a feedback mechanism to limit weight gain. The sequence is that of Fructose-1,6-bisphosphatase 1 (FBP1) from Homo sapiens (Human).